We begin with the raw amino-acid sequence, 289 residues long: uncharacterized protein (289 aa).

This is an uncharacterized protein from Acanthamoeba polyphaga mimivirus (APMV).